A 197-amino-acid polypeptide reads, in one-letter code: Short chain dehydrogenase ausX (197 aa).

NADP(+)-binding residues include I49, D95, R157, and Y189. The Proton acceptor role is filled by Y189. Y189 serves as the catalytic Proton donor.

The protein belongs to the short-chain dehydrogenases/reductases (SDR) family.

The protein operates within secondary metabolite biosynthesis; terpenoid biosynthesis. In terms of biological role, short chain dehydrogenase; part of the gene cluster A that mediates the biosynthesis of austinol and dehydroaustinol, two fungal meroterpenoids. The first step of the pathway is the synthesis of 3,5-dimethylorsellinic acid by the polyketide synthase ausA. 3,5-dimethylorsellinic acid is then prenylated by the polyprenyl transferase ausN. Further epoxidation by the FAD-dependent monooxygenase ausM and cyclization by the probable terpene cyclase ausL lead to the formation of protoaustinoid A. Protoaustinoid A is then oxidized to spiro-lactone preaustinoid A3 by the combined action of the FAD-binding monooxygenases ausB and ausC, and the dioxygenase ausE. Acid-catalyzed keto-rearrangement and ring contraction of the tetraketide portion of preaustinoid A3 by ausJ lead to the formation of preaustinoid A4. The aldo-keto reductase ausK, with the help of ausH, is involved in the next step by transforming preaustinoid A4 into isoaustinone which is in turn hydroxylated by the P450 monooxygenase ausI to form austinolide. Finally, the cytochrome P450 monooxygenase ausG modifies austinolide to austinol. Austinol can be further modified to dehydroaustinol which forms a diffusible complex with diorcinol that initiates conidiation. Due to genetic rearrangements of the clusters and the subsequent loss of some enzymes, the end products of the Emericella nidulans austinoid biosynthesis clusters are austinol and dehydroaustinol, even if additional enzymes, such as the O-acetyltransferase ausQ and the cytochrome P450 monooxygenase ausR are still functional. This chain is Short chain dehydrogenase ausX, found in Emericella nidulans (strain FGSC A4 / ATCC 38163 / CBS 112.46 / NRRL 194 / M139) (Aspergillus nidulans).